The following is a 349-amino-acid chain: tRNA N6-adenosine threonylcarbamoyltransferase (349 aa).

The Fe cation site is built by histidine 115 and histidine 119. Residues 137–141 (LASGG), aspartate 170, glycine 183, and asparagine 281 contribute to the substrate site. Aspartate 309 contributes to the Fe cation binding site.

This sequence belongs to the KAE1 / TsaD family. Requires Fe(2+) as cofactor.

The protein resides in the cytoplasm. It catalyses the reaction L-threonylcarbamoyladenylate + adenosine(37) in tRNA = N(6)-L-threonylcarbamoyladenosine(37) in tRNA + AMP + H(+). Functionally, required for the formation of a threonylcarbamoyl group on adenosine at position 37 (t(6)A37) in tRNAs that read codons beginning with adenine. Is involved in the transfer of the threonylcarbamoyl moiety of threonylcarbamoyl-AMP (TC-AMP) to the N6 group of A37, together with TsaE and TsaB. TsaD likely plays a direct catalytic role in this reaction. This is tRNA N6-adenosine threonylcarbamoyltransferase from Methylobacterium nodulans (strain LMG 21967 / CNCM I-2342 / ORS 2060).